Here is a 731-residue protein sequence, read N- to C-terminus: 1,4-alpha-glucan branching enzyme GlgB (731 aa).

Residue aspartate 411 is the Nucleophile of the active site. Glutamate 464 (proton donor) is an active-site residue.

This sequence belongs to the glycosyl hydrolase 13 family. GlgB subfamily. In terms of assembly, monomer.

It carries out the reaction Transfers a segment of a (1-&gt;4)-alpha-D-glucan chain to a primary hydroxy group in a similar glucan chain.. The protein operates within glycan biosynthesis; glycogen biosynthesis. Catalyzes the formation of the alpha-1,6-glucosidic linkages in glycogen by scission of a 1,4-alpha-linked oligosaccharide from growing alpha-1,4-glucan chains and the subsequent attachment of the oligosaccharide to the alpha-1,6 position. In Mycobacterium bovis (strain ATCC BAA-935 / AF2122/97), this protein is 1,4-alpha-glucan branching enzyme GlgB.